The following is a 464-amino-acid chain: 3-isopropylmalate dehydratase large subunit (464 aa).

[4Fe-4S] cluster-binding residues include C337, C397, and C400.

The protein belongs to the aconitase/IPM isomerase family. LeuC type 1 subfamily. Heterodimer of LeuC and LeuD. [4Fe-4S] cluster is required as a cofactor.

The enzyme catalyses (2R,3S)-3-isopropylmalate = (2S)-2-isopropylmalate. It functions in the pathway amino-acid biosynthesis; L-leucine biosynthesis; L-leucine from 3-methyl-2-oxobutanoate: step 2/4. Functionally, catalyzes the isomerization between 2-isopropylmalate and 3-isopropylmalate, via the formation of 2-isopropylmaleate. In Bacillus cereus (strain G9842), this protein is 3-isopropylmalate dehydratase large subunit.